The sequence spans 107 residues: Large ribosomal subunit protein uL24 (107 aa).

This sequence belongs to the universal ribosomal protein uL24 family. As to quaternary structure, part of the 50S ribosomal subunit.

In terms of biological role, one of two assembly initiator proteins, it binds directly to the 5'-end of the 23S rRNA, where it nucleates assembly of the 50S subunit. One of the proteins that surrounds the polypeptide exit tunnel on the outside of the subunit. This is Large ribosomal subunit protein uL24 from Mesomycoplasma hyopneumoniae (strain 7448) (Mycoplasma hyopneumoniae).